The following is a 297-amino-acid chain: Cyclin-dependent kinase 1 (297 aa).

Residue Met1 is modified to N-acetylmethionine. Tyr4 bears the Phosphotyrosine; by PKR mark. A Protein kinase domain is found at 4–287 (YTKIEKIGEG…GKMALNHPYF (284 aa)). Residues Lys6 and Lys9 each carry the N6-acetyllysine; alternate modification. Glycyl lysine isopeptide (Lys-Gly) (interchain with G-Cter in SUMO2); alternate cross-links involve residues Lys6 and Lys9. An ATP-binding site is contributed by 10-18 (IGEGTYGVV). Thr14 is subject to Phosphothreonine; by PKMYT1. Position 15 is a phosphotyrosine; by PKMYT1, WEE1, WEE2 and PKC/PRKCD (Tyr15). At Tyr19 the chain carries Phosphotyrosine. Lys20 is covalently cross-linked (Glycyl lysine isopeptide (Lys-Gly) (interchain with G-Cter in SUMO2)). Lys33 is a binding site for ATP. Phosphoserine is present on Ser39. Residue Tyr77 is modified to Phosphotyrosine. Catalysis depends on Asp128, which acts as the Proton acceptor. Lys139 is covalently cross-linked (Glycyl lysine isopeptide (Lys-Gly) (interchain with G-Cter in SUMO2)). Thr141 carries the post-translational modification Phosphothreonine. Position 161 is a phosphothreonine; by CAK (Thr161). A Phosphoserine modification is found at Ser178. Thr222 bears the Phosphothreonine mark. Lys245 is modified (N6-succinyllysine). Position 248 is a phosphoserine (Ser248).

It belongs to the protein kinase superfamily. CMGC Ser/Thr protein kinase family. CDC2/CDKX subfamily. Forms a stable but non-covalent complex with a regulatory subunit and with a cyclin. The cyclin subunit imparts substrate specificity to the complex. Interacts with cyclins-B (CCNB1, CCNB2 and CCNB3) to form a serine/threonine kinase holoenzyme complex also known as maturation promoting factor (MPF). Promotes G2-M transition when in complex with a cyclin-B. Can also form CDK1-cylin-D and CDK1-cyclin-E complexes that phosphorylate RB1 in vitro. Associates with cyclins-A and B1 during S-phase in regenerating hepatocytes. Interacts with DLGAP5. Binds to the CDK inhibitors CDKN1A/p21 and CDKN1B/p27. Interacts with catalytically active CCNB1 and RALBP1 during mitosis to form an endocytotic complex during interphase. Interacts with FANCC. Interacts with CEP63; this interaction recruits CDK1 to centrosomes. Interacts with CENPA. Interacts with NR1D1. Interacts with proteasome subunit PSMA8; to participate in meiosis progression during spermatogenesis. In terms of assembly, unable to complex with cyclin-B1 and also fails to bind to CDKN1A/p21. As to quaternary structure, (Microbial infection) Interacts with severe fever with thrombocytopenia syndrome virus (SFTSV) NSs; this interaction is inclusion body dependent, it inhibits the formation and nuclear import of the cyclin B1-CDK1 complex and leads to cell cycle arrest. In terms of processing, phosphorylation at Thr-161 by CAK/CDK7 activates kinase activity. Phosphorylation at Thr-14 and Tyr-15 by PKMYT1 prevents nuclear translocation. Phosphorylation at Tyr-15 by WEE1 and WEE2 inhibits the protein kinase activity and acts as a negative regulator of entry into mitosis (G2 to M transition). Phosphorylation by PKMYT1 and WEE1 takes place during mitosis to keep CDK1-cyclin-B complexes inactive until the end of G2. By the end of G2, PKMYT1 and WEE1 are inactivated, but CDC25A and CDC25B are activated. Dephosphorylation by active CDC25A and CDC25B at Thr-14 and Tyr-15, leads to CDK1 activation at the G2-M transition. Phosphorylation at Tyr-15 by WEE2 during oogenesis is required to maintain meiotic arrest in oocytes during the germinal vesicle (GV) stage, a long period of quiescence at dictyate prophase I, leading to prevent meiotic reentry. Phosphorylation by WEE2 is also required for metaphase II exit during egg activation to ensure exit from meiosis in oocytes and promote pronuclear formation. Phosphorylated at Tyr-4 by PKR/EIF2AK2 upon genotoxic stress. This phosphorylation triggers CDK1 polyubiquitination and subsequent proteolysis, thus leading to G2 arrest. In response to UV irradiation, phosphorylation at Tyr-15 by PRKCD activates the G2/M DNA damage checkpoint. Polyubiquitinated upon genotoxic stress. Found in breast cancer tissues.

The protein resides in the nucleus. The protein localises to the cytoplasm. Its subcellular location is the mitochondrion. It localises to the cytoskeleton. It is found in the microtubule organizing center. The protein resides in the centrosome. The protein localises to the spindle. It carries out the reaction L-seryl-[protein] + ATP = O-phospho-L-seryl-[protein] + ADP + H(+). It catalyses the reaction L-threonyl-[protein] + ATP = O-phospho-L-threonyl-[protein] + ADP + H(+). The catalysed reaction is [DNA-directed RNA polymerase] + ATP = phospho-[DNA-directed RNA polymerase] + ADP + H(+). Its activity is regulated as follows. Phosphorylation at Thr-14 or Tyr-15 inactivates the enzyme, while phosphorylation at Thr-161 activates it. Activated through a multistep process; binding to cyclin-B is required for relocation of cyclin-kinase complexes to the nucleus, activated by CAK/CDK7-mediated phosphorylation on Thr-161, and CDC25-mediated dephosphorylation of inhibitory phosphorylation on Thr-14 and Tyr-15. Activity is restricted during S-phase in an ATR-dependent manner to prevent premature entry into G2. Repressed by the CDK inhibitors CDKN1A/p21 and CDKN1B/p27 during the G1 phase and by CDKN1A/p21 at the G1-S checkpoint upon DNA damage. Transient activation by rapid and transient dephosphorylation at Tyr-15 triggered by TGFB1. Inhibited by flavopiridol and derivatives, pyrimidine derivatives, pyridine derivatives, purine derivatives, staurosporine, paullones, oxoindoles, indazole analogs, indolin-2-ones, pyrazolo[3,4-b]pyridines, imidazo[1,2-a]pyridine (AZ703), thiazolinone analogs(RO-3306), thiazol urea, macrocyclic quinoxalin-2-one, pyrrolo[2,3-a]carbazole, pyrazolo[1,5-a]-1,3,5-triazine, pyrazolo[1,5-a]pyrimidine (Dinaciclib, SCH 727965), 2-(1-ethyl-2-hydroxyethylamino)-6-benzylamino-9-isopropylpurine (roscovitine), olomoucine, AG-024322, AT-7519, P276-00, R547/Ro-4584820 and SNS-032/BMS-387032. Functionally, plays a key role in the control of the eukaryotic cell cycle by modulating the centrosome cycle as well as mitotic onset; promotes G2-M transition via association with multiple interphase cyclins. Phosphorylates PARVA/actopaxin, APC, AMPH, APC, BARD1, Bcl-xL/BCL2L1, BRCA2, CALD1, CASP8, CDC7, CDC20, CDC25A, CDC25C, CC2D1A, CENPA, CSNK2 proteins/CKII, FZR1/CDH1, CDK7, CEBPB, CHAMP1, DMD/dystrophin, EEF1 proteins/EF-1, EZH2, KIF11/EG5, EGFR, FANCG, FOS, GFAP, GOLGA2/GM130, GRASP1, UBE2A/hHR6A, HIST1H1 proteins/histone H1, HMGA1, HIVEP3/KRC, KAT5, LMNA, LMNB, LBR, MKI67, LATS1, MAP1B, MAP4, MARCKS, MCM2, MCM4, MKLP1, MLST8, MYB, NEFH, NFIC, NPC/nuclear pore complex, PITPNM1/NIR2, NPM1, NCL, NUCKS1, NPM1/numatrin, ORC1, PRKAR2A, EEF1E1/p18, EIF3F/p47, p53/TP53, NONO/p54NRB, PAPOLA, PLEC/plectin, RB1, TPPP, UL40/R2, RAB4A, RAP1GAP, RBBP8/CtIP, RCC1, RPS6KB1/S6K1, KHDRBS1/SAM68, ESPL1, SKI, BIRC5/survivin, STIP1, TEX14, beta-tubulins, MAPT/TAU, NEDD1, VIM/vimentin, TK1, FOXO1, RUNX1/AML1, SAMHD1, SIRT2, CGAS and RUNX2. CDK1/CDC2-cyclin-B controls pronuclear union in interphase fertilized eggs. Essential for early stages of embryonic development. During G2 and early mitosis, CDC25A/B/C-mediated dephosphorylation activates CDK1/cyclin complexes which phosphorylate several substrates that trigger at least centrosome separation, Golgi dynamics, nuclear envelope breakdown and chromosome condensation. Once chromosomes are condensed and aligned at the metaphase plate, CDK1 activity is switched off by WEE1- and PKMYT1-mediated phosphorylation to allow sister chromatid separation, chromosome decondensation, reformation of the nuclear envelope and cytokinesis. Phosphorylates KRT5 during prometaphase and metaphase. Inactivated by PKR/EIF2AK2- and WEE1-mediated phosphorylation upon DNA damage to stop cell cycle and genome replication at the G2 checkpoint thus facilitating DNA repair. Reactivated after successful DNA repair through WIP1-dependent signaling leading to CDC25A/B/C-mediated dephosphorylation and restoring cell cycle progression. Catalyzes lamin (LMNA, LMNB1 and LMNB2) phosphorylation at the onset of mitosis, promoting nuclear envelope breakdown. In proliferating cells, CDK1-mediated FOXO1 phosphorylation at the G2-M phase represses FOXO1 interaction with 14-3-3 proteins and thereby promotes FOXO1 nuclear accumulation and transcription factor activity, leading to cell death of postmitotic neurons. The phosphorylation of beta-tubulins regulates microtubule dynamics during mitosis. NEDD1 phosphorylation promotes PLK1-mediated NEDD1 phosphorylation and subsequent targeting of the gamma-tubulin ring complex (gTuRC) to the centrosome, an important step for spindle formation. In addition, CC2D1A phosphorylation regulates CC2D1A spindle pole localization and association with SCC1/RAD21 and centriole cohesion during mitosis. The phosphorylation of Bcl-xL/BCL2L1 after prolongated G2 arrest upon DNA damage triggers apoptosis. In contrast, CASP8 phosphorylation during mitosis prevents its activation by proteolysis and subsequent apoptosis. This phosphorylation occurs in cancer cell lines, as well as in primary breast tissues and lymphocytes. EZH2 phosphorylation promotes H3K27me3 maintenance and epigenetic gene silencing. CALD1 phosphorylation promotes Schwann cell migration during peripheral nerve regeneration. CDK1-cyclin-B complex phosphorylates NCKAP5L and mediates its dissociation from centrosomes during mitosis. Regulates the amplitude of the cyclic expression of the core clock gene BMAL1 by phosphorylating its transcriptional repressor NR1D1, and this phosphorylation is necessary for SCF(FBXW7)-mediated ubiquitination and proteasomal degradation of NR1D1. Phosphorylates EML3 at 'Thr-881' which is essential for its interaction with HAUS augmin-like complex and TUBG1. Phosphorylates CGAS during mitosis, leading to its inhibition, thereby preventing CGAS activation by self DNA during mitosis. Phosphorylates SKA3 on multiple sites during mitosis which promotes SKA3 binding to the NDC80 complex and anchoring of the SKA complex to kinetochores, to enable stable attachment of mitotic spindle microtubules to kinetochores. (Microbial infection) Acts as a receptor for hepatitis C virus (HCV) in hepatocytes and facilitates its cell entry. The sequence is that of Cyclin-dependent kinase 1 (CDK1) from Homo sapiens (Human).